The primary structure comprises 274 residues: MDRPGFVAALVAGGVAGVSVDLILFPLDTIKTRLQSPQGFSKAGGFHGIYAGVPSAAIGSFPNAAAFFITYEYVKWFLHADSSSYLTPMKHMLAASAGEVVACLIRVPSEVVKQRAQVSASTRTFQIFSNILYEEGIQGLYRGYKSTVLREIPFSLVQFPLWESLKALWSWRQDHVVDSWQSAVCGAFAGGFAAAVTTPLDVAKTRITLAKAGSSTADGNVLSVLHGVWRSQGLAGLFAGVFPRMAAISLGGFIFLGAYDRTHSLLLEVGRKSP.

Solcar repeat units follow at residues 4–77 (PGFV…VKWF), 86–168 (LTPM…LKAL), and 177–265 (VDSW…THSL). 6 consecutive transmembrane segments (helical) span residues 5–25 (GFVAALVAGGVAGVSVDLILF), 49–69 (IYAGVPSAAIGSFPNAAAFFI), 85–105 (YLTPMKHMLAASAGEVVACLI), 142–162 (RGYKSTVLREIPFSLVQFPLW), 182–202 (SAVCGAFAGGFAAAVTTPLDV), and 238–258 (FAGVFPRMAAISLGGFIFLGA).

This sequence belongs to the mitochondrial carrier (TC 2.A.29) family. In terms of tissue distribution, widely expressed. Highly expressed in testis, with moderate expression in brain, heart, kidney, lung, skeletal muscle, pancreas, small intestine and liver, and low expression in spleen.

Its subcellular location is the mitochondrion inner membrane. It catalyses the reaction S-adenosyl-L-homocysteine(out) + S-adenosyl-L-methionine(in) = S-adenosyl-L-homocysteine(in) + S-adenosyl-L-methionine(out). With respect to regulation, strongly inhibited by tannic acid and Bromocresol Purple. In terms of biological role, mitochondrial S-adenosyl-L-methionine/S-adenosyl-L-homocysteine antiporter. Mediates the exchange of cytosolic S-adenosyl-L-methionine, the predominant methyl-group donor for macromolecule methylation processes, for mitochondrial S-adenosylhomocysteine(SAH), a by-product of methylation reactions. This chain is Mitochondrial S-adenosylmethionine carrier protein, found in Homo sapiens (Human).